We begin with the raw amino-acid sequence, 71 residues long: Hainantoxin-X-2 (71 aa).

Positions 1–26 (MKTAIFTVVLALAVFAVLCLVVSTHA) are cleaved as a signal peptide. Residues 27 to 43 (ERHSKTDMEDSPMIQER) constitute a propeptide that is removed on maturation. 2 cysteine pairs are disulfide-bonded: cysteine 52-cysteine 65 and cysteine 61-cysteine 70.

It belongs to the neurotoxin 36 family. 02 subfamily. Expressed by the venom gland.

It localises to the secreted. Its function is as follows. Reversibly blocks N-type calcium channels (Cav2.2/CACNA1B) in rat dorsal root ganglion cells. Elicits no toxic symptoms in either vertebrates or invertebrates during a period of 48 hours post-injection, when it was assayed in vivo by direct injection into mice and cockroaches. The sequence is that of Hainantoxin-X-2 from Cyriopagopus hainanus (Chinese bird spider).